We begin with the raw amino-acid sequence, 2534 residues long: Highly reducing polyketide synthase easB (2534 aa).

The tract at residues 1 to 49 is disordered; that stretch reads MSPASRSRVEIADSESDSERLSSSPWSILSDNDSNTSDERSTRAGPGSL. Positions 49–470 constitute a Ketosynthase family 3 (KS3) domain; it reads LEPIAVIGIG…GTNAHVIIDA (422 aa). Residues C222, H356, and H396 each act as for beta-ketoacyl synthase activity in the active site. The segment at 587–885 is malonyl-CoA:ACP transacylase (MAT) domain; it reads IFSGQGAQYA…LSGPVNQILK (299 aa). Positions 973–1111 are N-terminal hotdog fold; it reads HELLGTLSAD…GLVQAEVDSV (139 aa). The segment at 973-1273 is dehydratase (DH) domain; that stretch reads HELLGTLSAD…QGIRVTSLGG (301 aa). The 305-residue stretch at 973 to 1277 folds into the PKS/mFAS DH domain; that stretch reads HELLGTLSAD…VTSLGGDVAA (305 aa). H1005 acts as the Proton acceptor; for dehydratase activity in catalysis. The segment at 1131–1277 is C-terminal hotdog fold; sequence THGTIPQKFY…VTSLGGDVAA (147 aa). The Proton donor; for dehydratase activity role is filled by D1193. A methyltransferase (CMet) domain region spans residues 1395-1625; the sequence is KTSALSLLTK…VFISTAPFPR (231 aa). An enoyl reductase (ER) domain region spans residues 1834–2146; it reads GLLETIRWKD…AGKHTGKIVL (313 aa). In terms of domain architecture, Carrier spans 2452 to 2529; the sequence is EAVHIVTNAI…QLAAIVAKES (78 aa). Residues 2453–2526 are ketoreductase (KR) domain; sequence AVHIVTNAIL…SISQLAAIVA (74 aa). At S2489 the chain carries O-(pantetheine 4'-phosphoryl)serine.

It functions in the pathway antibiotic biosynthesis. Polyketide synthase; part of the gene cluster that mediates the biosynthesis of emericellamides, secondary metabolites acting as antibiotics. The biosynthesis of emericellamides initiates from the highly reducing polyketide synthase easB which catalyzes the formation of the linear polyketide chain. EasB produces several polyketides that can be further processed by the downstream enzymes. The polyketides are released from easB as linear polyketide carboxylic acids, which are converted to CoA thioesters by the acyl-CoA ligase easD. The substrates are then loaded onto the acyltransferase easC, which shuttles them to the first thiolation (T) domain of the nonribosomal peptide synthetase easA. EasA then performs condensation of the polyketides with one glycine, two alanine, one valine and one leucine residues. A last step of cyclization leads to the production of emericellamides. This Emericella nidulans (strain FGSC A4 / ATCC 38163 / CBS 112.46 / NRRL 194 / M139) (Aspergillus nidulans) protein is Highly reducing polyketide synthase easB.